The following is a 53-amino-acid chain: Sec-independent protein translocase protein TatA (53 aa).

A helical transmembrane segment spans residues 1 to 21 (MGMSFSHLLIVLLIIFVLFGA).

This sequence belongs to the TatA/E family. The Tat system comprises two distinct complexes: a TatABC complex, containing multiple copies of TatA, TatB and TatC subunits, and a separate TatA complex, containing only TatA subunits. Substrates initially bind to the TatABC complex, which probably triggers association of the separate TatA complex to form the active translocon.

Its subcellular location is the cell inner membrane. Part of the twin-arginine translocation (Tat) system that transports large folded proteins containing a characteristic twin-arginine motif in their signal peptide across membranes. TatA could form the protein-conducting channel of the Tat system. The chain is Sec-independent protein translocase protein TatA from Rickettsia akari (strain Hartford).